A 401-amino-acid polypeptide reads, in one-letter code: Probable tRNA sulfurtransferase (401 aa).

The THUMP domain occupies 60-165; it reads EPIIEKLKTV…QDGTYVTCRD (106 aa). ATP-binding positions include 183–184, 208–209, Arg265, Gly287, and Gln296; these read ML and HF.

Belongs to the ThiI family.

It is found in the cytoplasm. It carries out the reaction [ThiI sulfur-carrier protein]-S-sulfanyl-L-cysteine + a uridine in tRNA + 2 reduced [2Fe-2S]-[ferredoxin] + ATP + H(+) = [ThiI sulfur-carrier protein]-L-cysteine + a 4-thiouridine in tRNA + 2 oxidized [2Fe-2S]-[ferredoxin] + AMP + diphosphate. It catalyses the reaction [ThiS sulfur-carrier protein]-C-terminal Gly-Gly-AMP + S-sulfanyl-L-cysteinyl-[cysteine desulfurase] + AH2 = [ThiS sulfur-carrier protein]-C-terminal-Gly-aminoethanethioate + L-cysteinyl-[cysteine desulfurase] + A + AMP + 2 H(+). It functions in the pathway cofactor biosynthesis; thiamine diphosphate biosynthesis. Its function is as follows. Catalyzes the ATP-dependent transfer of a sulfur to tRNA to produce 4-thiouridine in position 8 of tRNAs, which functions as a near-UV photosensor. Also catalyzes the transfer of sulfur to the sulfur carrier protein ThiS, forming ThiS-thiocarboxylate. This is a step in the synthesis of thiazole, in the thiamine biosynthesis pathway. The sulfur is donated as persulfide by IscS. This is Probable tRNA sulfurtransferase from Geobacillus kaustophilus (strain HTA426).